The following is a 317-amino-acid chain: Mitochondrial outer membrane protein porin 4 (317 aa).

The interval 1-30 is disordered; that stretch reads MEAETECKVPGVYSETGIPVEDPAPGLNSD.

Belongs to the eukaryotic mitochondrial porin (TC 1.B.8.1) family.

It is found in the mitochondrion outer membrane. In terms of biological role, forms a channel through the mitochondrial outer membrane that allows diffusion of small hydrophilic molecules. The channel adopts an open conformation at low or zero membrane potential and a closed conformation at potentials above 30-40 mV. The open state has a weak anion selectivity whereas the closed state is cation-selective. This is Mitochondrial outer membrane protein porin 4 (VDAC4) from Oryza sativa subsp. japonica (Rice).